We begin with the raw amino-acid sequence, 298 residues long: Probable tRNA(His) guanylyltransferase (298 aa).

Positions 58, 59, and 105 each coordinate Mg(2+). GTP-binding positions include 58–63 (DGRNFH) and 104–105 (SD).

Belongs to the tRNA(His) guanylyltransferase family. In terms of assembly, homotetramer. Interacts with MFN1 and MFN2; functions as a guanyl-nucleotide exchange factor/GEF for MFN2 and also probably MFN1. Mg(2+) serves as cofactor. Expressed in many tissues.

The protein localises to the cytoplasm. Its subcellular location is the mitochondrion outer membrane. It carries out the reaction a 5'-end ribonucleotide-tRNA(His) + GTP + ATP + H2O = a 5'-end phospho-guanosine-ribonucleotide-tRNA(His) + AMP + 2 diphosphate + H(+). In terms of biological role, adds a GMP to the 5'-end of tRNA(His) after transcription and RNase P cleavage. This step is essential for proper recognition of the tRNA and for the fidelity of protein synthesis. Also functions as a guanyl-nucleotide exchange factor/GEF for the MFN1 and MFN2 mitofusins thereby regulating mitochondrial fusion. By regulating both mitochondrial dynamics and bioenergetic function, it contributes to cell survival following oxidative stress. In Homo sapiens (Human), this protein is Probable tRNA(His) guanylyltransferase (THG1L).